The sequence spans 757 residues: Mitofusin-2 (757 aa).

The Cytoplasmic segment spans residues 1–604 (MSLLFSRCNS…TQEEFMVSMV (604 aa)). Residues 30 to 94 (KHFVTAKKKI…VRGISEVLAR (65 aa)) are part of a helix bundle domain, formed by helices from N-terminal and C-terminal regions. The Dynamin-type G domain occupies 93 to 342 (ARRHMKVAFF…VRMFEFQNFE (250 aa)). Residues 103 to 110 (GRTSNGKS) form a G1 motif region. Residue 106–111 (SNGKST) participates in GTP binding. T111 carries the post-translational modification Phosphothreonine; by PINK1. The interval 129-130 (TT) is G2 motif. The G3 motif stretch occupies residues 199 to 202 (DSPG). Residue 258–261 (NRWD) coordinates GTP. Residues 258–261 (NRWD) are G4 motif. Residue E288 is a region of interest, G5 motif. Residues S305 and K307 each contribute to the GTP site. The segment at 359–385 (EQHTVRAKQIAEAVRLIMDSLHMAARE) is part of a helix bundle domain, formed by helices from N-terminal and C-terminal regions. Positions 391-434 (EEMREERQDRLKFIDKQLELLAQDYKLRIKQITEEVERQVSTAM) form a coiled coil. S442 is subject to Phosphoserine; by PINK1. The helical transmembrane segment at 605-625 (TGLASLTSRTSMGILVVGGVV) threads the bilayer. Position 626 (W626) is a topological domain, mitochondrial intermembrane. Residues 627–647 (KAVGWRLIALSFGLYGLLYVY) traverse the membrane as a helical segment. Residues 648–757 (ERLTWTTKAK…FTHQYLQPSR (110 aa)) are Cytoplasmic-facing. A coiled-coil region spans residues 695 to 738 (TFAHLCQQVDVTRENLEQEIAAMNKKIEVLDSLQSKAKLLRNKA). The part of a helix bundle domain, formed by helices from N-terminal and C-terminal regions stretch occupies residues 722 to 753 (EVLDSLQSKAKLLRNKAGWLDSELNMFTHQYL).

Belongs to the TRAFAC class dynamin-like GTPase superfamily. Dynamin/Fzo/YdjA family. Mitofusin subfamily. As to quaternary structure, forms homomultimers and heteromultimers with MFN1. Oligomerization is essential for mitochondrion fusion. Interacts with VAT1. Interacts with STOML2; may form heterooligomers. Interacts (phosphorylated) with PRKN. Interacts with EIF2AK3. Interacts with THG1L; THG1L probably functions as a guanyl-nucleotide exchange factor/GEF, activating MFN2. In terms of processing, phosphorylated by PINK1. Post-translationally, ubiquitinated by non-degradative ubiquitin by PRKN, promoting mitochondrial fusion; deubiquitination by USP30 inhibits mitochondrial fusion. Ubiquitinated by HUWE1 when dietary stearate (C18:0) levels are low; ubiquitination inhibits mitochondrial fusion. As to expression, ubiquitous; expressed at low level. Highly expressed in heart and kidney.

It localises to the mitochondrion outer membrane. The enzyme catalyses GTP + H2O = GDP + phosphate + H(+). Functionally, mitochondrial outer membrane GTPase that mediates mitochondrial clustering and fusion. Mitochondria are highly dynamic organelles, and their morphology is determined by the equilibrium between mitochondrial fusion and fission events. Overexpression induces the formation of mitochondrial networks. Membrane clustering requires GTPase activity and may involve a major rearrangement of the coiled coil domains. Plays a central role in mitochondrial metabolism and may be associated with obesity and/or apoptosis processes. Plays an important role in the regulation of vascular smooth muscle cell proliferation. Involved in the clearance of damaged mitochondria via selective autophagy (mitophagy). Is required for PRKN recruitment to dysfunctional mitochondria. Involved in the control of unfolded protein response (UPR) upon ER stress including activation of apoptosis and autophagy during ER stress. Acts as an upstream regulator of EIF2AK3 and suppresses EIF2AK3 activation under basal conditions. The chain is Mitofusin-2 from Homo sapiens (Human).